A 180-amino-acid polypeptide reads, in one-letter code: Large ribosomal subunit protein uL5 (180 aa).

The protein belongs to the universal ribosomal protein uL5 family. In terms of assembly, part of the 50S ribosomal subunit; part of the 5S rRNA/L5/L18/L25 subcomplex. Contacts the 5S rRNA and the P site tRNA. Forms a bridge to the 30S subunit in the 70S ribosome.

In terms of biological role, this is one of the proteins that bind and probably mediate the attachment of the 5S RNA into the large ribosomal subunit, where it forms part of the central protuberance. In the 70S ribosome it contacts protein S13 of the 30S subunit (bridge B1b), connecting the 2 subunits; this bridge is implicated in subunit movement. Contacts the P site tRNA; the 5S rRNA and some of its associated proteins might help stabilize positioning of ribosome-bound tRNAs. This is Large ribosomal subunit protein uL5 from Cupriavidus necator (strain ATCC 17699 / DSM 428 / KCTC 22496 / NCIMB 10442 / H16 / Stanier 337) (Ralstonia eutropha).